Reading from the N-terminus, the 301-residue chain is Putative hydro-lyase C5H10.01 (301 aa).

Belongs to the D-glutamate cyclase family.

The protein is Putative hydro-lyase C5H10.01 of Schizosaccharomyces pombe (strain 972 / ATCC 24843) (Fission yeast).